A 110-amino-acid chain; its full sequence is Minor capsid protein VP2 (110 aa).

This sequence belongs to the vesivirus VP2 protein family. Homooligomer. The portal-like structure consists in 12 copies of VP2. Interacts with capsid protein VP1.

The protein resides in the virion. It localises to the host cytoplasm. Its function is as follows. Minor structural protein that forms a portal-like structure at a unique three-fold axis of symmetry, following binding to the host receptor. The channel formed by VP2 may allow the delivery of the viral genome through the host endosomal membrane. In Otariidae (fur seals &amp; sea lions), this protein is Minor capsid protein VP2.